The chain runs to 288 residues: Quinate/shikimate dehydrogenase (288 aa).

Lys71 and Asp107 together coordinate substrate. Residues 132 to 135 (AGGA), 155 to 158 (NRKD), Lys205, 232 to 235 (CVYN), and Gly255 contribute to the NAD(+) site.

Belongs to the shikimate dehydrogenase family. In terms of assembly, homodimer.

The catalysed reaction is L-quinate + NAD(+) = 3-dehydroquinate + NADH + H(+). It catalyses the reaction L-quinate + NADP(+) = 3-dehydroquinate + NADPH + H(+). The enzyme catalyses shikimate + NADP(+) = 3-dehydroshikimate + NADPH + H(+). It carries out the reaction shikimate + NAD(+) = 3-dehydroshikimate + NADH + H(+). Its pathway is metabolic intermediate biosynthesis; chorismate biosynthesis; chorismate from D-erythrose 4-phosphate and phosphoenolpyruvate: step 4/7. Its function is as follows. The actual biological function of YdiB remains unclear, nor is it known whether 3-dehydroshikimate or quinate represents the natural substrate. Catalyzes the reversible NAD-dependent reduction of both 3-dehydroshikimate (DHSA) and 3-dehydroquinate to yield shikimate (SA) and quinate, respectively. It can use both NAD or NADP for catalysis, however it has higher catalytic efficiency with NAD. In Salmonella agona (strain SL483), this protein is Quinate/shikimate dehydrogenase.